The following is a 112-amino-acid chain: ATP-dependent Clp protease adapter protein ClpS (112 aa).

Belongs to the ClpS family. In terms of assembly, binds to the N-terminal domain of the chaperone ClpA.

Its function is as follows. Involved in the modulation of the specificity of the ClpAP-mediated ATP-dependent protein degradation. In Rhodococcus opacus (strain B4), this protein is ATP-dependent Clp protease adapter protein ClpS.